A 483-amino-acid chain; its full sequence is tRNA-2-methylthio-N(6)-dimethylallyladenosine synthase (483 aa).

Positions 31-148 constitute an MTTase N-terminal domain; it reads KKLYIETQGC…LPQMLDQHHA (118 aa). 6 residues coordinate [4Fe-4S] cluster: C40, C77, C111, C192, C196, and C199. A Radical SAM core domain is found at 178 to 410; it reads RVEGFKAFVS…QQVIKQSSIE (233 aa). The TRAM domain occupies 413 to 477; sequence DAMLGKIERV…LNLVYGELLN (65 aa).

Belongs to the methylthiotransferase family. MiaB subfamily. As to quaternary structure, monomer. It depends on [4Fe-4S] cluster as a cofactor.

The protein resides in the cytoplasm. The catalysed reaction is N(6)-dimethylallyladenosine(37) in tRNA + (sulfur carrier)-SH + AH2 + 2 S-adenosyl-L-methionine = 2-methylsulfanyl-N(6)-dimethylallyladenosine(37) in tRNA + (sulfur carrier)-H + 5'-deoxyadenosine + L-methionine + A + S-adenosyl-L-homocysteine + 2 H(+). Functionally, catalyzes the methylthiolation of N6-(dimethylallyl)adenosine (i(6)A), leading to the formation of 2-methylthio-N6-(dimethylallyl)adenosine (ms(2)i(6)A) at position 37 in tRNAs that read codons beginning with uridine. The sequence is that of tRNA-2-methylthio-N(6)-dimethylallyladenosine synthase from Acinetobacter baumannii (strain AB0057).